The following is a 214-amino-acid chain: MATTRKPRGGAGGATQPALDFDAPGEIVCGVDEAGRGPLAGPVVAAAVVLDPARPIVGLDDSKALSAKKRERLFDEIVAHALAYSVASASVEEIDSLNILHATMLAMKRAVEGLSVLPTLAKIDGNRCPMLAIRSEAIVGGDALVPSISAASILAKVTRDRTLVELHQQFPMYGFDAHAGYGTPQHLAALREHGPCEHHRRSFAPVREAFDLIR.

One can recognise an RNase H type-2 domain in the interval 26–214 (EIVCGVDEAG…PVREAFDLIR (189 aa)). The a divalent metal cation site is built by Asp-32, Glu-33, and Asp-124.

It belongs to the RNase HII family. Mn(2+) serves as cofactor. The cofactor is Mg(2+).

The protein resides in the cytoplasm. The catalysed reaction is Endonucleolytic cleavage to 5'-phosphomonoester.. In terms of biological role, endonuclease that specifically degrades the RNA of RNA-DNA hybrids. The protein is Ribonuclease HII of Burkholderia pseudomallei (strain 1710b).